We begin with the raw amino-acid sequence, 309 residues long: Porphobilinogen deaminase (309 aa).

The residue at position 243 (C243) is an S-(dipyrrolylmethanemethyl)cysteine.

It belongs to the HMBS family. Monomer. Dipyrromethane is required as a cofactor.

The enzyme catalyses 4 porphobilinogen + H2O = hydroxymethylbilane + 4 NH4(+). It participates in porphyrin-containing compound metabolism; protoporphyrin-IX biosynthesis; coproporphyrinogen-III from 5-aminolevulinate: step 2/4. Functionally, tetrapolymerization of the monopyrrole PBG into the hydroxymethylbilane pre-uroporphyrinogen in several discrete steps. In Deinococcus radiodurans (strain ATCC 13939 / DSM 20539 / JCM 16871 / CCUG 27074 / LMG 4051 / NBRC 15346 / NCIMB 9279 / VKM B-1422 / R1), this protein is Porphobilinogen deaminase (hemC).